The sequence spans 121 residues: Large ribosomal subunit protein bL12 (121 aa).

This sequence belongs to the bacterial ribosomal protein bL12 family. In terms of assembly, homodimer. Part of the ribosomal stalk of the 50S ribosomal subunit. Forms a multimeric L10(L12)X complex, where L10 forms an elongated spine to which 2 to 4 L12 dimers bind in a sequential fashion. Binds GTP-bound translation factors.

Forms part of the ribosomal stalk which helps the ribosome interact with GTP-bound translation factors. Is thus essential for accurate translation. This chain is Large ribosomal subunit protein bL12, found in Pelagibacter ubique (strain HTCC1062).